A 233-amino-acid chain; its full sequence is Ribitol-5-phosphate cytidylyltransferase (233 aa).

Residues 7-10 (LAGG) and 80-86 (GADRNET) contribute to the CTP site.

The protein belongs to the IspD/TarI cytidylyltransferase family. TarI subfamily.

The enzyme catalyses D-ribitol 5-phosphate + CTP + H(+) = CDP-L-ribitol + diphosphate. Its pathway is cell wall biogenesis; poly(ribitol phosphate) teichoic acid biosynthesis. Functionally, catalyzes the transfer of the cytidylyl group of CTP to D-ribitol 5-phosphate. The protein is Ribitol-5-phosphate cytidylyltransferase of Lactiplantibacillus plantarum (strain ATCC BAA-793 / NCIMB 8826 / WCFS1) (Lactobacillus plantarum).